The following is a 281-amino-acid chain: E3 ubiquitin-protein ligase MARCHF5 (281 aa).

Residues Leu-9 to Val-78 form an RING-CH-type zinc finger. 8 residues coordinate Zn(2+): Cys-17, Cys-20, Cys-36, Cys-38, His-46, Cys-49, Cys-68, and Cys-71. 4 helical membrane passes run Phe-102–Val-122, Pro-142–Ile-162, Ile-212–Ser-232, and Thr-241–Gln-261.

It is found in the mitochondrion outer membrane. Its subcellular location is the endoplasmic reticulum membrane. The enzyme catalyses S-ubiquitinyl-[E2 ubiquitin-conjugating enzyme]-L-cysteine + [acceptor protein]-L-lysine = [E2 ubiquitin-conjugating enzyme]-L-cysteine + N(6)-ubiquitinyl-[acceptor protein]-L-lysine.. Its pathway is protein modification; protein ubiquitination. Functionally, mitochondrial E3 ubiquitin-protein ligase that plays a crucial role in the control of mitochondrial morphology by acting as a positive regulator of mitochondrial fission. May play a role in the prevention of cell senescence acting as a regulator of mitochondrial quality control. The chain is E3 ubiquitin-protein ligase MARCHF5 (MARCHF5) from Gallus gallus (Chicken).